Consider the following 377-residue polypeptide: 4-hydroxy-tetrahydrodipicolinate synthase 2, chloroplastic (377 aa).

A chloroplast-targeting transit peptide spans 1–51; the sequence is MMAAQPTANPGVRLGWKAPGALASPPRLALSRSAAAPLASHRVGRGKFSAA. T120 contacts pyruvate. Y206 (proton donor/acceptor) is an active-site residue. K234 (schiff-base intermediate with substrate) is an active-site residue. I273 lines the pyruvate pocket.

The protein belongs to the DapA family. Tetramer of modified subunits derived from two genes in different combinations.

Its subcellular location is the plastid. It localises to the chloroplast. The enzyme catalyses L-aspartate 4-semialdehyde + pyruvate = (2S,4S)-4-hydroxy-2,3,4,5-tetrahydrodipicolinate + H2O + H(+). Its pathway is amino-acid biosynthesis; L-lysine biosynthesis via DAP pathway; (S)-tetrahydrodipicolinate from L-aspartate: step 3/4. Its activity is regulated as follows. Sensitive to lysine inhibition. This inhibition increase in an allosteric manner with increasing concentration of the inhibitor. Functionally, catalyzes the condensation of (S)-aspartate-beta-semialdehyde [(S)-ASA] and pyruvate to 4-hydroxy-tetrahydrodipicolinate (HTPA). This is 4-hydroxy-tetrahydrodipicolinate synthase 2, chloroplastic from Triticum aestivum (Wheat).